A 464-amino-acid polypeptide reads, in one-letter code: Arginine biosynthesis bifunctional protein ArgJ, chloroplastic (464 aa).

Substrate-binding residues include T208, K234, T245, E332, N459, and T464. The Nucleophile role is filled by T245.

It belongs to the ArgJ family. In terms of assembly, heterodimer of an alpha and a beta chain.

Its subcellular location is the plastid. It is found in the chloroplast. It catalyses the reaction N(2)-acetyl-L-ornithine + L-glutamate = N-acetyl-L-glutamate + L-ornithine. The catalysed reaction is L-glutamate + acetyl-CoA = N-acetyl-L-glutamate + CoA + H(+). It functions in the pathway amino-acid biosynthesis; L-arginine biosynthesis; L-ornithine and N-acetyl-L-glutamate from L-glutamate and N(2)-acetyl-L-ornithine (cyclic): step 1/1. Its pathway is amino-acid biosynthesis; L-arginine biosynthesis; N(2)-acetyl-L-ornithine from L-glutamate: step 1/4. Catalyzes two activities which are involved in the cyclic version of arginine biosynthesis: the synthesis of acetylglutamate from glutamate and acetyl-CoA, and of ornithine by transacetylation between acetylornithine and glutamate. In Sorghum bicolor (Sorghum), this protein is Arginine biosynthesis bifunctional protein ArgJ, chloroplastic.